Consider the following 567-residue polypeptide: Protein phosphatase 1 regulatory inhibitor subunit 16B (567 aa).

The stretch at 15 to 55 (EKVPTLERLRAAQKRRAQQLKKWAQYEQDLQHRKRKHERKR) forms a coiled coil. Ser-69 is modified (phosphoserine). 4 ANK repeats span residues 100 to 129 (DGLTALHQCCIDNFEEIVKLLLSHGANVNA), 133 to 162 (ELWTPLHAAATCGHINLVKILVQYGADLLA), 228 to 257 (QGATLLHIAGANGYLRAAELLLDHGVRVDV), and 261 to 290 (DGWEPLHAAAFWGQMQMAELLVSHGASLSA). 3 positions are modified to phosphoserine: Ser-333, Ser-337, and Ser-350. The segment at 378-403 (RTSTYNGDIRETRTDQENKDPNPRLE) is disordered. The span at 385 to 403 (DIRETRTDQENKDPNPRLE) shows a compositional bias: basic and acidic residues. Ser-476 carries the phosphoserine modification. Polar residues predominate over residues 504 to 515 (SSMARTGESSSE). Residues 504–525 (SSMARTGESSSEGKAPLIGGRT) are disordered. The ANK 5 repeat unit spans residues 530–559 (SNGTSVYYTVTSGDPPLLKFKAPIEEMEEK). The S-palmitoyl cysteine moiety is linked to residue Cys-563. Cys-564 bears the Cysteine methyl ester mark. Residue Cys-564 is the site of S-farnesyl cysteine attachment. Residues 565–567 (RIS) constitute a propeptide, removed in mature form.

As to quaternary structure, interacts with PPP1CA, PPP1CB and MSN. Interacts (via its fourth ankyrin repeat) with the mature dimeric form of RPSA/LAMR1. Interacts with EEF1A1. Interacts with PTEN. Interacts with ECE1. Post-translationally, phosphorylated by PKA and, after PKA priming, by GSK3B. Phosphorylation by GSK3B reduces its association with PP1C and enhances PP1C activity. Dephosphorylation by its associated PP1C results in enhanced association with PP1C, but reduced PP1C activity.

The protein localises to the cell membrane. The protein resides in the nucleus. It is found in the cell projection. Functionally, regulator of protein phosphatase 1 (PP1) that acts as a positive regulator of pulmonary endothelial cell (EC) barrier function. Involved in the regulation of the PI3K/AKT signaling pathway, angiogenesis and endothelial cell proliferation. Regulates angiogenesis and endothelial cell proliferation through the control of ECE1 dephosphorylation, trafficking and activity. Protects the endothelial barrier from lipopolysaccharide (LPS)-induced vascular leakage. Involved in the regulation of endothelial cell filopodia extension. May be a downstream target for TGF-beta1 signaling cascade in endothelial cells. Involved in PKA-mediated moesin dephosphorylation which is important in EC barrier protection against thrombin stimulation. Promotes the interaction of PPP1CA with RPSA/LAMR1 and in turn facilitates the dephosphorylation of RPSA/LAMR1. Involved in the dephosphorylation of EEF1A1. In Homo sapiens (Human), this protein is Protein phosphatase 1 regulatory inhibitor subunit 16B (PPP1R16B).